We begin with the raw amino-acid sequence, 515 residues long: Integrator complex subunit 14 (515 aa).

The VWFA domain maps to 2 to 204 (PTVVVMDVSL…KNVQSMFGKL (203 aa)). Serine 10, serine 12, and threonine 86 together coordinate Mg(2+). Lysine 418 is subject to N6-acetyllysine.

Belongs to the Integrator subunit 14 family. As to quaternary structure, component of the Integrator complex, composed of core subunits INTS1, INTS2, INTS3, INTS4, INTS5, INTS6, INTS7, INTS8, INTS9/RC74, INTS10, INTS11/CPSF3L, INTS12, INTS13, INTS14 and INTS15. The core complex associates with protein phosphatase 2A subunits PPP2CA and PPP2R1A, to form the Integrator-PP2A (INTAC) complex. INTS14 is part of the tail subcomplex, composed of INTS10, INTS13, INTS14 and INTS15.

Its subcellular location is the nucleus. Functionally, component of the integrator complex, a multiprotein complex that terminates RNA polymerase II (Pol II) transcription in the promoter-proximal region of genes. The integrator complex provides a quality checkpoint during transcription elongation by driving premature transcription termination of transcripts that are unfavorably configured for transcriptional elongation: the complex terminates transcription by (1) catalyzing dephosphorylation of the C-terminal domain (CTD) of Pol II subunit POLR2A/RPB1 and SUPT5H/SPT5, (2) degrading the exiting nascent RNA transcript via endonuclease activity and (3) promoting the release of Pol II from bound DNA. The integrator complex is also involved in terminating the synthesis of non-coding Pol II transcripts, such as enhancer RNAs (eRNAs), small nuclear RNAs (snRNAs), telomerase RNAs and long non-coding RNAs (lncRNAs). Within the integrator complex, INTS14 is part of the integrator tail module that acts as a platform for the recruitment of transcription factors at promoters. The sequence is that of Integrator complex subunit 14 from Mus musculus (Mouse).